A 319-amino-acid polypeptide reads, in one-letter code: Ribose-phosphate pyrophosphokinase (319 aa).

Residues 41–43 (NGE) and 100–101 (RQ) each bind ATP. Residues His134 and Asp175 each coordinate Mg(2+). Lys198 is an active-site residue. D-ribose 5-phosphate contacts are provided by residues Arg200, Asp224, and 228–232 (DTAGS).

This sequence belongs to the ribose-phosphate pyrophosphokinase family. Class I subfamily. In terms of assembly, homohexamer. The cofactor is Mg(2+).

It is found in the cytoplasm. The enzyme catalyses D-ribose 5-phosphate + ATP = 5-phospho-alpha-D-ribose 1-diphosphate + AMP + H(+). It functions in the pathway metabolic intermediate biosynthesis; 5-phospho-alpha-D-ribose 1-diphosphate biosynthesis; 5-phospho-alpha-D-ribose 1-diphosphate from D-ribose 5-phosphate (route I): step 1/1. In terms of biological role, involved in the biosynthesis of the central metabolite phospho-alpha-D-ribosyl-1-pyrophosphate (PRPP) via the transfer of pyrophosphoryl group from ATP to 1-hydroxyl of ribose-5-phosphate (Rib-5-P). The protein is Ribose-phosphate pyrophosphokinase of Clostridium acetobutylicum (strain ATCC 824 / DSM 792 / JCM 1419 / IAM 19013 / LMG 5710 / NBRC 13948 / NRRL B-527 / VKM B-1787 / 2291 / W).